The primary structure comprises 160 residues: Ureidoglycolate lyase (160 aa).

This sequence belongs to the ureidoglycolate lyase family. Homodimer. Ni(2+) serves as cofactor.

It catalyses the reaction (S)-ureidoglycolate = urea + glyoxylate. It participates in nitrogen metabolism; (S)-allantoin degradation. In terms of biological role, catalyzes the catabolism of the allantoin degradation intermediate (S)-ureidoglycolate, generating urea and glyoxylate. Involved in the utilization of allantoin as nitrogen source. This Salmonella gallinarum (strain 287/91 / NCTC 13346) protein is Ureidoglycolate lyase.